Consider the following 448-residue polypeptide: N-succinylarginine dihydrolase (448 aa).

Residues G19–S28, N110, and H137–R138 each bind substrate. E174 is a catalytic residue. R214 serves as a coordination point for substrate. The active site involves H250. D252 and N365 together coordinate substrate. C371 serves as the catalytic Nucleophile.

The protein belongs to the succinylarginine dihydrolase family. As to quaternary structure, homodimer.

The catalysed reaction is N(2)-succinyl-L-arginine + 2 H2O + 2 H(+) = N(2)-succinyl-L-ornithine + 2 NH4(+) + CO2. It participates in amino-acid degradation; L-arginine degradation via AST pathway; L-glutamate and succinate from L-arginine: step 2/5. Functionally, catalyzes the hydrolysis of N(2)-succinylarginine into N(2)-succinylornithine, ammonia and CO(2). This Pseudomonas aeruginosa (strain UCBPP-PA14) protein is N-succinylarginine dihydrolase.